The primary structure comprises 95 residues: Aspartyl/glutamyl-tRNA(Asn/Gln) amidotransferase subunit C (95 aa).

This sequence belongs to the GatC family. Heterotrimer of A, B and C subunits.

It catalyses the reaction L-glutamyl-tRNA(Gln) + L-glutamine + ATP + H2O = L-glutaminyl-tRNA(Gln) + L-glutamate + ADP + phosphate + H(+). The enzyme catalyses L-aspartyl-tRNA(Asn) + L-glutamine + ATP + H2O = L-asparaginyl-tRNA(Asn) + L-glutamate + ADP + phosphate + 2 H(+). Its function is as follows. Allows the formation of correctly charged Asn-tRNA(Asn) or Gln-tRNA(Gln) through the transamidation of misacylated Asp-tRNA(Asn) or Glu-tRNA(Gln) in organisms which lack either or both of asparaginyl-tRNA or glutaminyl-tRNA synthetases. The reaction takes place in the presence of glutamine and ATP through an activated phospho-Asp-tRNA(Asn) or phospho-Glu-tRNA(Gln). This chain is Aspartyl/glutamyl-tRNA(Asn/Gln) amidotransferase subunit C, found in Xanthobacter autotrophicus (strain ATCC BAA-1158 / Py2).